An 82-amino-acid polypeptide reads, in one-letter code: Mitotic-spindle organizing protein 1 (82 aa).

At Ala-2 the chain carries N-acetylalanine.

This sequence belongs to the MOZART1 family. In terms of assembly, associates with the gamma-tubulin ring complex (gTuRC) consisting of TUBGCP2, TUBGCP3, TUBGCP4, TUBGCP5 and TUBGCP6 and gamma-tubulin TUBG1 or TUBG2; within the complex, interacts with TUBGCP3 and TUBGCP6 to form a luminal bridge with actin that stabilizes the initial structure during complex assembly. Interacts with TUBG1.

Its subcellular location is the cytoplasm. The protein resides in the cytoskeleton. It is found in the microtubule organizing center. The protein localises to the centrosome. It localises to the spindle. Its function is as follows. Required for the recruitment and the assembly of the gamma-tubulin ring complex (gTuRC) at the centrosome. The gTuRC regulates the minus-end nucleation of alpha-beta tubulin heterodimers that grow into microtubule protafilaments, a critical step in centrosome duplication and spindle formation. This is Mitotic-spindle organizing protein 1 (MZT1) from Homo sapiens (Human).